A 1480-amino-acid chain; its full sequence is Cystic fibrosis transmembrane conductance regulator (1480 aa).

Topologically, residues 1–77 are cytoplasmic; sequence MQRSPLEKAS…KLINALRRCF (77 aa). The chain crosses the membrane as a helical span at residues 78–98; sequence FWRFMFYGILLYLGEVTKAVQ. One can recognise an ABC transmembrane type-1 1 domain in the interval 81-365; it reads FMFYGILLYL…WAVQTWYDSL (285 aa). The Extracellular segment spans residues 99–122; that stretch reads PLLLGRIIASYDPDNKTERSIAIY. The chain crosses the membrane as a helical span at residues 123–146; sequence LGIGLCLLFIVRTLLLHPAIFGLH. Residues 147 to 195 are Cytoplasmic-facing; that stretch reads HIGMQMRIAMFSLIYKKTLKLSSRVLDKISIGQLVSLLSNNLNKFDEGL. Residues 196 to 216 traverse the membrane as a helical segment; it reads ALAHFVWIAPLQVALLMGLIW. The Extracellular portion of the chain corresponds to 217–222; the sequence is ELLQAS. Residues 223 to 243 form a helical membrane-spanning segment; that stretch reads VFCGLGFLIVLALFQAGLGRM. Residues 244–298 lie on the Cytoplasmic side of the membrane; sequence MMKYRDQRAGKINERLVITSEMIENIQSVKAYCWEEAMEKMIENLRQTELKLTRK. The helical transmembrane segment at 299–319 threads the bilayer; sequence AAYVRYFNSSAFFFSGFFVVF. Over 320–339 the chain is Extracellular; that stretch reads LSVLPYALIKGIILRKIFTT. A helical transmembrane segment spans residues 340-358; that stretch reads ISFCIVLRMAVTRQFPWAV. Residues 359-858 are Cytoplasmic-facing; that stretch reads QTWYDSLGAI…YLRYITLHKS (500 aa). Residues tryptophan 401, serine 434, 458–465, and glutamine 493 each bind ATP; that span reads GSTGAGKT. Residues 423–646 form the ABC transporter 1 domain; sequence NGHDNLFFSN…RPDFSSKLMG (224 aa). A lipid anchor (S-palmitoyl cysteine) is attached at cysteine 524. 2 positions are modified to phosphoserine: serine 549 and serine 660. The disordered R region stretch occupies residues 654–831; sequence SSERRNSILT…EEINEEDLKE (178 aa). Serine 670 bears the Phosphoserine; by PKA mark. Phosphoserine is present on serine 686. Residue lysine 688 forms a Glycyl lysine isopeptide (Lys-Gly) (interchain with G-Cter in ubiquitin) linkage. Serine 700 and serine 712 each carry phosphoserine. Threonine 717 is subject to Phosphothreonine. 6 positions are modified to phosphoserine: serine 737, serine 753, serine 768, serine 790, serine 795, and serine 813. Residues 859–879 form a helical membrane-spanning segment; that stretch reads LIFVLIWCLVIFLAEVAASLV. The ABC transmembrane type-1 2 domain occupies 859–1155; the sequence is LIFVLIWCLV…AVNSSIDVDS (297 aa). Residues 880–918 are Extracellular-facing; the sequence is VLWLLGNTSFQDKGNSTYSRNNSYAVIITNTSSYYVFYI. N-linked (GlcNAc...) asparagine glycosylation is found at asparagine 894, asparagine 900, and asparagine 909. A discontinuously helical transmembrane segment spans residues 919 to 939; that stretch reads YVGVADTLLALGFFRGLPLVH. Residues 940 to 990 are Cytoplasmic-facing; it reads TLITVSKILHHKMLHSVLQAPMSTLNTLKAGGILNRFSKDIAILDDLLPLT. Residues 991-1011 form a helical membrane-spanning segment; sequence IFDFIQLLLIVIGAIAVVSVL. The Extracellular segment spans residues 1012–1013; the sequence is QP. The helical transmembrane segment at 1014–1034 threads the bilayer; sequence YIFLATVPVIAAFILLRAYFL. Over 1035–1095 the chain is Cytoplasmic; sequence QTSQQLKQLE…TANWFLYLST (61 aa). The chain crosses the membrane as a helical span at residues 1096–1116; the sequence is LRWFQMRIEMIFVIFFIAVTF. At 1117–1130 the chain is on the extracellular side; that stretch reads ISILTTGEGEGTVG. The helical transmembrane segment at 1131–1151 threads the bilayer; the sequence is IILTLAMNIMSTLQWAVNSSI. The Cytoplasmic portion of the chain corresponds to 1152–1480; that stretch reads DVDSLMRSVS…TEEEVQETRL (329 aa). Residues 1210-1443 enclose the ABC transporter 2 domain; the sequence is MTIKDLTAKY…KSLFQQAISH (234 aa). Residues tyrosine 1219 and 1244–1251 contribute to the ATP site; that span reads GRTGSGKS. The segment at 1386–1480 is interaction with GORASP2; that stretch reads RALKQAFADC…TEEEVQETRL (95 aa). The S-palmitoyl cysteine moiety is linked to residue cysteine 1395. Residues serine 1444 and serine 1456 each carry the phosphoserine modification. Residues 1452–1480 are disordered; that stretch reads HRNSSKYKSRPQIASLKEETEEEVQETRL. Over residues 1470 to 1480 the composition is skewed to acidic residues; sequence ETEEEVQETRL. Residues 1478-1480 carry the PDZ-binding motif; it reads TRL.

It belongs to the ABC transporter superfamily. ABCC family. CFTR transporter (TC 3.A.1.202) subfamily. As to quaternary structure, monomer; does not require oligomerization for channel activity. May form oligomers in the membrane. Interacts with SLC26A3, SLC26A6 and NHERF1. Interacts with SHANK2. Interacts with MYO6. Interacts (via C-terminus) with GOPC (via PDZ domain); this promotes CFTR internalization and thereby decreases channel activity. Interacts with SLC4A7 through NHERF1. Found in a complex with MYO5B and RAB11A. Interacts with ANO1. Interacts with SLC26A8. Interacts with AHCYL1; the interaction increases CFTR activity. Interacts with CSE1L. The core-glycosylated form interacts with GORASP2 (via PDZ GRASP-type 1 domain) in respone to ER stress. Interacts with MARCHF2; the interaction leads to CFTR ubiqtuitination and degradation. Interacts with ADGRG2. Post-translationally, N-glycosylated. Phosphorylated; cAMP treatment promotes phosphorylation and activates the channel. Dephosphorylation decreases the ATPase activity (in vitro). Phosphorylation at PKA sites activates the channel. Phosphorylation at PKC sites enhances the response to phosphorylation by PKA. Phosphorylated by AMPK; this inhibits channel activity. In terms of processing, ubiquitinated, leading to its degradation in the lysosome. Deubiquitination by USP10 in early endosomes enhances its endocytic recycling to the cell membrane. Ubiquitinated by RNF185 during ER stress. Ubiquitinated by MARCHF2.

It localises to the apical cell membrane. Its subcellular location is the early endosome membrane. The protein resides in the cell membrane. The protein localises to the recycling endosome membrane. It is found in the endoplasmic reticulum membrane. It localises to the nucleus. The catalysed reaction is ATP + H2O + closed Cl(-) channel = ADP + phosphate + open Cl(-) channel.. The enzyme catalyses chloride(in) = chloride(out). It catalyses the reaction hydrogencarbonate(in) = hydrogencarbonate(out). It carries out the reaction ATP + H2O = ADP + phosphate + H(+). Epithelial ion channel that plays an important role in the regulation of epithelial ion and water transport and fluid homeostasis. Mediates the transport of chloride ions across the cell membrane. Possesses an intrinsic ATPase activity and utilizes ATP to gate its channel; the passive flow of anions through the channel is gated by cycles of ATP binding and hydrolysis by the ATP-binding domains. The ion channel is also permeable to HCO(3)(-); selectivity depends on the extracellular chloride concentration. Exerts its function also by modulating the activity of other ion channels and transporters. Contributes to the regulation of the pH and the ion content of the epithelial fluid layer. Modulates the activity of the epithelial sodium channel (ENaC) complex, in part by regulating the cell surface expression of the ENaC complex. May regulate bicarbonate secretion and salvage in epithelial cells by regulating the transporter SLC4A7. Can inhibit the chloride channel activity of ANO1. Plays a role in the chloride and bicarbonate homeostasis during sperm epididymal maturation and capacitation. This chain is Cystic fibrosis transmembrane conductance regulator, found in Plecturocebus moloch (Dusky titi monkey).